Consider the following 574-residue polypeptide: Septation ring formation regulator EzrA (574 aa).

The Extracellular portion of the chain corresponds to Met1–Ile7. Residues Leu8 to Leu26 form a helical membrane-spanning segment. Residues Arg27–Phe574 lie on the Cytoplasmic side of the membrane. Coiled coils occupy residues Leu104–Asn141, Asn267–Asn424, and Ala456–Glu524.

This sequence belongs to the EzrA family.

The protein localises to the cell membrane. Negative regulator of FtsZ ring formation; modulates the frequency and position of FtsZ ring formation. Inhibits FtsZ ring formation at polar sites. Interacts either with FtsZ or with one of its binding partners to promote depolymerization. In Streptococcus gordonii (strain Challis / ATCC 35105 / BCRC 15272 / CH1 / DL1 / V288), this protein is Septation ring formation regulator EzrA.